The chain runs to 61 residues: DNA-binding protein 7a (61 aa).

A disordered region spans residues 37–61 (NGKTGRGAVSEKDAPKELLEKLEKK). Basic and acidic residues predominate over residues 45–61 (VSEKDAPKELLEKLEKK).

It belongs to the 7 kDa DNA-binding/endoribonuclease P2 family. Monomer.

Its subcellular location is the cytoplasm. Functionally, can constrain negative DNA supercoils. May be involved in maintaining the integrity of the genome at high temperature. The sequence is that of DNA-binding protein 7a from Acidianus hospitalis (strain W1).